The following is a 125-amino-acid chain: Large ribosomal subunit protein bL12 (125 aa).

This sequence belongs to the bacterial ribosomal protein bL12 family. As to quaternary structure, homodimer. Part of the ribosomal stalk of the 50S ribosomal subunit. Forms a multimeric L10(L12)X complex, where L10 forms an elongated spine to which 2 to 4 L12 dimers bind in a sequential fashion. Binds GTP-bound translation factors.

In terms of biological role, forms part of the ribosomal stalk which helps the ribosome interact with GTP-bound translation factors. Is thus essential for accurate translation. The sequence is that of Large ribosomal subunit protein bL12 from Methylobacterium radiotolerans (strain ATCC 27329 / DSM 1819 / JCM 2831 / NBRC 15690 / NCIMB 10815 / 0-1).